We begin with the raw amino-acid sequence, 262 residues long: 3-methyl-2-oxobutanoate hydroxymethyltransferase (262 aa).

Mg(2+) is bound by residues aspartate 42 and aspartate 81. 3-methyl-2-oxobutanoate is bound by residues 42 to 43 (DS), aspartate 81, and lysine 110. A Mg(2+)-binding site is contributed by glutamate 112. The active-site Proton acceptor is the glutamate 180.

It belongs to the PanB family. Homodecamer; pentamer of dimers. The cofactor is Mg(2+).

It is found in the cytoplasm. The enzyme catalyses 3-methyl-2-oxobutanoate + (6R)-5,10-methylene-5,6,7,8-tetrahydrofolate + H2O = 2-dehydropantoate + (6S)-5,6,7,8-tetrahydrofolate. It functions in the pathway cofactor biosynthesis; (R)-pantothenate biosynthesis; (R)-pantoate from 3-methyl-2-oxobutanoate: step 1/2. Catalyzes the reversible reaction in which hydroxymethyl group from 5,10-methylenetetrahydrofolate is transferred onto alpha-ketoisovalerate to form ketopantoate. This Legionella pneumophila (strain Paris) protein is 3-methyl-2-oxobutanoate hydroxymethyltransferase.